We begin with the raw amino-acid sequence, 156 residues long: Arginine repressor (156 aa).

Belongs to the ArgR family.

Its subcellular location is the cytoplasm. The protein operates within amino-acid biosynthesis; L-arginine biosynthesis [regulation]. Regulates arginine biosynthesis genes. In Enterobacter sp. (strain 638), this protein is Arginine repressor.